A 304-amino-acid chain; its full sequence is GTPase Era (304 aa).

One can recognise an Era-type G domain in the interval 7 to 178 (KCGVVAVLGA…KNALAALMPE (172 aa)). A G1 region spans residues 15-22 (GAPNAGKS). Position 15–22 (15–22 (GAPNAGKS)) interacts with GTP. The interval 41–45 (QTTRA) is G2. Positions 66–69 (DTPG) are G3. GTP contacts are provided by residues 66 to 70 (DTPGI) and 128 to 131 (NKVD). The G4 stretch occupies residues 128 to 131 (NKVD). The segment at 157 to 159 (VSA) is G5. In terms of domain architecture, KH type-2 spans 209–286 (LHEELPYDSA…HLFLHVKVDE (78 aa)).

Belongs to the TRAFAC class TrmE-Era-EngA-EngB-Septin-like GTPase superfamily. Era GTPase family. Monomer.

It is found in the cytoplasm. The protein resides in the cell inner membrane. Its function is as follows. An essential GTPase that binds both GDP and GTP, with rapid nucleotide exchange. Plays a role in 16S rRNA processing and 30S ribosomal subunit biogenesis and possibly also in cell cycle regulation and energy metabolism. The polypeptide is GTPase Era (Erythrobacter litoralis (strain HTCC2594)).